The following is a 380-amino-acid chain: GATOR1 complex protein NPRL2 (380 aa).

The interaction with PDPK1 stretch occupies residues M1–T133. Residue R78 coordinates GDP. Residue R78 is modified to Asymmetric dimethylarginine. Residues K158 and K357 each participate in a glycyl lysine isopeptide (Lys-Gly) (interchain with G-Cter in ubiquitin) cross-link.

This sequence belongs to the NPR2 family. As to quaternary structure, within the GATOR complex, component of the GATOR1 subcomplex, made of DEPDC5, NPRL2 and NPRL3. GATOR1 mediates the strong interaction of the GATOR complex with small GTPases Rag (RagA/RRAGA, RagB/RRAGB, RagC/RRAGC and/or RagD/RRAGD) heterodimers. GATOR1 interacts with GPR155/LYCHOS; interaction takes place in presence of cholesterol and prevents interaction between GATOR1 and KICSTOR. Interacts with PDPK1. In terms of processing, in the presence of abundant amino acids, ubiquitinated at Lys-158 and Lys-357 via 'Lys-6'-linked ubiquitination by the WDR24 component of the GATOR2 complex, thereby inhibiting the GATOR1 complex and promoting mTORC1 activation. Asymmetric dimethylation at Arg-78 by PRMT1 inhibits the GTPase activator activity of the GATOR1 complex and consequently inducing timely mTORC1 activation under methionine-sufficient conditions. In terms of tissue distribution, most abundant in skeletal muscle, followed by brain, liver and pancreas, with lower amounts in lung, kidney, placenta and heart. Expressed in the frontal lobe cortex as well as in the temporal, parietal, and occipital lobes. Expressed in most lung cancer cell lines tested.

It is found in the lysosome membrane. Its function is as follows. Catalytic component of the GATOR1 complex, a multiprotein complex that functions as an inhibitor of the amino acid-sensing branch of the mTORC1 pathway. In response to amino acid depletion, the GATOR1 complex has GTPase activating protein (GAP) activity and strongly increases GTP hydrolysis by RagA/RRAGA (or RagB/RRAGB) within heterodimeric Rag complexes, thereby turning them into their inactive GDP-bound form, releasing mTORC1 from lysosomal surface and inhibiting mTORC1 signaling. In the presence of abundant amino acids, the GATOR1 complex is ubiquitinated and inhibited by GATOR2. Within the GATOR1 complex, NPRL2 constitutes the catalytic subunit that mediates the GTPase activator activity and under methionine-sufficient conditions, the GTPase activator activity is inhibited by PRMT1 through methylation and consequently inducing timely mTORC1 activation. In terms of biological role, suppresses Src-dependent tyrosine phosphorylation and activation of PDPK1 and its downstream signaling. Down-regulates PDPK1 kinase activity by interfering with tyrosine phosphorylation at 'Tyr-9', 'Tyr-373' and 'Tyr-376' residues. May act as a tumor suppressor. Suppresses cell growth and enhances sensitivity to various anticancer drugs. The chain is GATOR1 complex protein NPRL2 from Homo sapiens (Human).